A 652-amino-acid chain; its full sequence is DNA ligase (652 aa).

Residues 29 to 33, 78 to 79, and Glu-107 each bind NAD(+); these read DSEYD and SL. The active-site N6-AMP-lysine intermediate is the Lys-109. NAD(+) contacts are provided by Arg-130, Glu-164, Lys-278, and Lys-302. Zn(2+)-binding residues include Cys-395, Cys-398, Cys-413, and Cys-418. Residues 577–652 form the BRCT domain; it reads DQQAALFGLT…IEDEDWLLNL (76 aa).

This sequence belongs to the NAD-dependent DNA ligase family. LigA subfamily. Mg(2+) is required as a cofactor. The cofactor is Mn(2+).

The enzyme catalyses NAD(+) + (deoxyribonucleotide)n-3'-hydroxyl + 5'-phospho-(deoxyribonucleotide)m = (deoxyribonucleotide)n+m + AMP + beta-nicotinamide D-nucleotide.. Functionally, DNA ligase that catalyzes the formation of phosphodiester linkages between 5'-phosphoryl and 3'-hydroxyl groups in double-stranded DNA using NAD as a coenzyme and as the energy source for the reaction. It is essential for DNA replication and repair of damaged DNA. The polypeptide is DNA ligase (Streptococcus equi subsp. equi (strain 4047)).